A 329-amino-acid polypeptide reads, in one-letter code: POU domain, class 5, transcription factor 2 (329 aa).

Residues 1–14 (MAGRRSSNVFPLSG) are compositionally biased toward polar residues. The interval 1-24 (MAGRRSSNVFPLSGNSGGGLEVDT) is disordered. The region spanning 107–181 (DVSAIQKEME…LLKMWLEEVD (75 aa)) is the POU-specific domain. A DNA-binding region (homeobox) is located at residues 199 to 258 (RKRRRASRERRIGSNLEKLFLQCPEPTPQQISYIAGRLRLQKDLVQVWFSNRSQMGSWPT).

The protein belongs to the POU transcription factor family. Class-5 subfamily. In terms of tissue distribution, in adult brain, expressed in the olfactory bulb, becoming specifically concentrated in the mitral cell layer. Also found in the pyramidal cell layer of the hippocampus, in the granule cell layer of the cerebellum and in the cortex.

The protein resides in the nucleus. Its function is as follows. Transcription factor that binds preferentially to the octamer motif (5'-ATGTTAAT-3'). May exert a regulatory function in meiotic events that are required for terminal differentiation of male germ cell. This Mus musculus (Mouse) protein is POU domain, class 5, transcription factor 2 (Pou5f2).